Here is a 323-residue protein sequence, read N- to C-terminus: Ribokinase (323 aa).

Substrate contacts are provided by residues methionine 26–aspartate 28, glycine 54–asparagine 58, and glutamate 155. Residues asparagine 200, threonine 236 to glycine 241, and threonine 257 each bind ATP. K(+)-binding residues include aspartate 264 and threonine 266. Residues glycine 269–aspartate 270 and asparagine 296 contribute to the ATP site. Aspartate 270 contributes to the substrate binding site. The Proton acceptor role is filled by aspartate 270. Serine 302, alanine 305, glycine 307, and serine 311 together coordinate K(+).

The protein belongs to the carbohydrate kinase PfkB family. Ribokinase subfamily. As to quaternary structure, homodimer. Mg(2+) is required as a cofactor.

It localises to the cytoplasm. It is found in the nucleus. The enzyme catalyses D-ribose + ATP = D-ribose 5-phosphate + ADP + H(+). It functions in the pathway carbohydrate metabolism; D-ribose degradation; D-ribose 5-phosphate from beta-D-ribopyranose: step 2/2. Activated by a monovalent cation that binds near, but not in, the active site. The most likely occupant of the site in vivo is potassium. Ion binding induces a conformational change that may alter substrate affinity. Competitively inhibited by phosphonoacetic acid, etidronate, 2-carboxethylphosphonic acid, N-(phosphonomethyl)glycine, N-(phosphonomethyl)iminodiacetic acid and clodronate. Functionally, catalyzes the phosphorylation of ribose at O-5 in a reaction requiring ATP and magnesium. The resulting D-ribose-5-phosphate can then be used either for sythesis of nucleotides, histidine, and tryptophan, or as a component of the pentose phosphate pathway. This Mus musculus (Mouse) protein is Ribokinase.